Reading from the N-terminus, the 72-residue chain is Translation initiation factor IF-1 (72 aa).

The S1-like domain occupies M1–R72.

It belongs to the IF-1 family. As to quaternary structure, component of the 30S ribosomal translation pre-initiation complex which assembles on the 30S ribosome in the order IF-2 and IF-3, IF-1 and N-formylmethionyl-tRNA(fMet); mRNA recruitment can occur at any time during PIC assembly.

The protein localises to the cytoplasm. In terms of biological role, one of the essential components for the initiation of protein synthesis. Stabilizes the binding of IF-2 and IF-3 on the 30S subunit to which N-formylmethionyl-tRNA(fMet) subsequently binds. Helps modulate mRNA selection, yielding the 30S pre-initiation complex (PIC). Upon addition of the 50S ribosomal subunit IF-1, IF-2 and IF-3 are released leaving the mature 70S translation initiation complex. This is Translation initiation factor IF-1 from Haemophilus ducreyi (strain 35000HP / ATCC 700724).